A 195-amino-acid chain; its full sequence is MARCKS-related protein (195 aa).

The tract at residues Met1–Glu195 is disordered. Residue Gly2 is the site of N-myristoyl glycine attachment. Phosphothreonine is present on Thr14. Residues Glu16 to Ala26 are compositionally biased toward low complexity. Ser22, Ser36, Ser41, and Ser48 each carry phosphoserine. The span at Gly53–Ala64 shows a compositional bias: low complexity. A Phosphoserine modification is found at Ser71. Basic and acidic residues predominate over residues Ala76–Thr85. Thr85 is subject to Phosphothreonine. The segment covering Pro86–Phe98 has biased composition (basic residues). The tract at residues Lys87–Lys110 is effector domain involved in lipid-binding and calmodulin-binding. Phosphoserine occurs at positions 93, 101, 104, 119, 120, and 135. Thr148 carries the phosphothreonine modification. Residues Ser151, Ser162, and Ser165 each carry the phosphoserine modification. Over residues Glu153 to Glu195 the composition is skewed to low complexity. 2 positions are modified to phosphothreonine: Thr178 and Thr187.

It belongs to the MARCKS family. In terms of assembly, binds to filamentous actin (F-actin), but not to monomeric G-actin, independently of its phosphorylation status. Post-translationally, phosphorylated. Phosphorylation at Ser-120 and Thr-178 is non-redundantly catalyzed by MAPK8 in vivo. Phosphorylation at Thr-148 is preferentially catalyzed by MAPK8 in vivo, but this modification can also be catalyzed by other kinases in the absence of MAPK8. May be phosphorylated by protein kinase C, which disrupts the interaction with calmodulin.

It localises to the cytoplasm. Its subcellular location is the cytoskeleton. The protein localises to the cell membrane. Its function is as follows. Controls cell movement by regulating actin cytoskeleton homeostasis and filopodium and lamellipodium formation. When unphosphorylated, induces cell migration. When phosphorylated by MAPK8, induces actin bundles formation and stabilization, thereby reducing actin plasticity, hence restricting cell movement, including neuronal migration. May be involved in coupling the protein kinase C and calmodulin signal transduction systems. The polypeptide is MARCKS-related protein (MARCKSL1) (Homo sapiens (Human)).